Reading from the N-terminus, the 256-residue chain is 1-(5-phosphoribosyl)-5-[(5-phosphoribosylamino)methylideneamino] imidazole-4-carboxamide isomerase (256 aa).

Asp9 serves as the catalytic Proton acceptor. The active-site Proton donor is the Asp130.

The protein belongs to the HisA/HisF family.

It is found in the cytoplasm. It catalyses the reaction 1-(5-phospho-beta-D-ribosyl)-5-[(5-phospho-beta-D-ribosylamino)methylideneamino]imidazole-4-carboxamide = 5-[(5-phospho-1-deoxy-D-ribulos-1-ylimino)methylamino]-1-(5-phospho-beta-D-ribosyl)imidazole-4-carboxamide. The protein operates within amino-acid biosynthesis; L-histidine biosynthesis; L-histidine from 5-phospho-alpha-D-ribose 1-diphosphate: step 4/9. The sequence is that of 1-(5-phosphoribosyl)-5-[(5-phosphoribosylamino)methylideneamino] imidazole-4-carboxamide isomerase from Prochlorococcus marinus (strain SARG / CCMP1375 / SS120).